The chain runs to 217 residues: Probable transaldolase (217 aa).

The active-site Schiff-base intermediate with substrate is the K83.

The protein belongs to the transaldolase family. Type 3B subfamily.

Its subcellular location is the cytoplasm. It catalyses the reaction D-sedoheptulose 7-phosphate + D-glyceraldehyde 3-phosphate = D-erythrose 4-phosphate + beta-D-fructose 6-phosphate. Its pathway is carbohydrate degradation; pentose phosphate pathway; D-glyceraldehyde 3-phosphate and beta-D-fructose 6-phosphate from D-ribose 5-phosphate and D-xylulose 5-phosphate (non-oxidative stage): step 2/3. In terms of biological role, transaldolase is important for the balance of metabolites in the pentose-phosphate pathway. This Caulobacter vibrioides (strain NA1000 / CB15N) (Caulobacter crescentus) protein is Probable transaldolase.